A 226-amino-acid chain; its full sequence is tRNA (guanine-N(7)-)-methyltransferase (226 aa).

Positions 1–22 are disordered; it reads MTTPQQPHGPLRSFGRLKSRPV. S-adenosyl-L-methionine is bound by residues Glu59, Glu84, Asp111, and Asp133. Residue Asp133 is part of the active site. Substrate is bound at residue Lys137. The segment at 139–144 is interaction with RNA; sequence RHNKRR. Residues Asp169 and 206-209 each bind substrate; that span reads TRYE.

It belongs to the class I-like SAM-binding methyltransferase superfamily. TrmB family.

The enzyme catalyses guanosine(46) in tRNA + S-adenosyl-L-methionine = N(7)-methylguanosine(46) in tRNA + S-adenosyl-L-homocysteine. It functions in the pathway tRNA modification; N(7)-methylguanine-tRNA biosynthesis. Catalyzes the formation of N(7)-methylguanine at position 46 (m7G46) in tRNA. The sequence is that of tRNA (guanine-N(7)-)-methyltransferase from Caulobacter vibrioides (strain ATCC 19089 / CIP 103742 / CB 15) (Caulobacter crescentus).